We begin with the raw amino-acid sequence, 285 residues long: Chalcone synthase 6-4 (285 aa).

Cys60 is an active-site residue.

The protein belongs to the thiolase-like superfamily. Chalcone/stilbene synthases family.

The enzyme catalyses (E)-4-coumaroyl-CoA + 3 malonyl-CoA + 3 H(+) = 2',4,4',6'-tetrahydroxychalcone + 3 CO2 + 4 CoA. The protein operates within secondary metabolite biosynthesis; flavonoid biosynthesis. In terms of biological role, the primary product of this enzyme is 4,2',4',6'-tetrahydroxychalcone (also termed naringenin-chalcone or chalcone) which can under specific conditions spontaneously isomerize into naringenin. In Medicago sativa (Alfalfa), this protein is Chalcone synthase 6-4 (CHS6-4).